The following is a 384-amino-acid chain: 23S rRNA (uracil(747)-C(5))-methyltransferase RlmC (384 aa).

Cys7, Cys15, Cys18, and Cys94 together coordinate [4Fe-4S] cluster. Residues Gln219, Phe248, Glu269, and Asn316 each coordinate S-adenosyl-L-methionine. The active-site Nucleophile is Cys343.

It belongs to the class I-like SAM-binding methyltransferase superfamily. RNA M5U methyltransferase family. RlmC subfamily.

It carries out the reaction uridine(747) in 23S rRNA + S-adenosyl-L-methionine = 5-methyluridine(747) in 23S rRNA + S-adenosyl-L-homocysteine + H(+). Functionally, catalyzes the formation of 5-methyl-uridine at position 747 (m5U747) in 23S rRNA. This is 23S rRNA (uracil(747)-C(5))-methyltransferase RlmC from Shewanella sp. (strain ANA-3).